The chain runs to 360 residues: Glycerol-3-phosphate dehydrogenase [NAD(+)], cytoplasmic (360 aa).

NAD(+) contacts are provided by residues 11–16, F98, K121, and A155; that span reads GSGNWG. K121 lines the substrate pocket. Catalysis depends on K206, which acts as the Proton acceptor. 2 residues coordinate NAD(+): R270 and Q299. 270-271 contacts substrate; sequence RN.

The protein belongs to the NAD-dependent glycerol-3-phosphate dehydrogenase family. As to quaternary structure, homodimer.

Its subcellular location is the cytoplasm. It catalyses the reaction sn-glycerol 3-phosphate + NAD(+) = dihydroxyacetone phosphate + NADH + H(+). The protein operates within phospholipid metabolism; alpha-glycerophosphate cycle. This Drosophila kanekoi (Fruit fly) protein is Glycerol-3-phosphate dehydrogenase [NAD(+)], cytoplasmic (Gpdh1).